The following is an 840-amino-acid chain: Protein argonaute-2 (840 aa).

The 120-residue stretch at 210-329 (PVIEFVCEVL…LPLEVCNIVA (120 aa)) folds into the PAZ domain. The residue at position 368 (Ser-368) is a Phosphoserine. The Piwi domain occupies 498–799 (LVVVILPGKT…VAFRARYHLV (302 aa)). The a divalent metal cation site is built by Asp-578 and Asp-650. Pro-681 is subject to 4-hydroxyproline. His-788 serves as a coordination point for a divalent metal cation. Residues Ser-805, Ser-809, Ser-812, and Ser-815 each carry the phosphoserine modification.

It belongs to the argonaute family. Ago subfamily. In terms of assembly, interacts with DICER1 through its Piwi domain and with TARBP2 during assembly of the RNA-induced silencing complex (RISC). Together, DICER1, AGO2 and TARBP2 constitute the trimeric RISC loading complex (RLC), or micro-RNA (miRNA) loading complex (miRLC). Within the RLC/miRLC, DICER1 and TARBP2 are required to process precursor miRNAs (pre-miRNAs) to mature miRNAs and then load them onto AGO2. AGO2 bound to the mature miRNA constitutes the minimal RISC and may subsequently dissociate from DICER1 and TARBP2. Note however that the term RISC has also been used to describe the trimeric RLC/miRLC. The formation of RISC complexes containing siRNAs rather than miRNAs appears to occur independently of DICER1. Interacts with AGO1. Also interacts with DDB1, DDX5, DDX6, DDX20, DHX30, DHX36, DDX47, DHX9, ELAVL, FXR1, GEMIN4, HNRNPF, IGF2BP1, ILF3, IMP8, MATR3, PABPC1, PRMT5, P4HA1, P4HB, RBM4, SART3, TNRC6A, TNRC6B, UPF1 and YBX1. Interacts with the P-body components DCP1A and XRN1. Associates with polysomes and messenger ribonucleoproteins (mNRPs). Interacts with RBM4; the interaction is modulated under stress-induced conditions, occurs under both cell proliferation and differentiation conditions and in an RNA- and phosphorylation-independent manner. Interacts with LIMD1, WTIP and AJUBA. Interacts with TRIM71; the interaction increases in presence of RNA. Interacts with APOBEC3G in an RNA-dependent manner. Interacts with APOBEC3A, APOBEC3C, APOBEC3F and APOBEC3H. Interacts with DICER1, TARBP2, EIF6, MOV10 and RPL7A (60S ribosome subunit); they form a large RNA-induced silencing complex (RISC). Interacts with FMR1. Interacts with ZFP36. Interacts with RC3H1; the interaction is RNA independent. Found in a complex composed of AGO2, CHD7 and ARB2A. Interacts with SND1 and SYT11. Interacts with CLNK. Interacts with GARRE1. In terms of processing, hydroxylated. 4-hydroxylation appears to enhance protein stability but is not required for miRNA-binding or endonuclease activity. Post-translationally, ubiquitinated on surface-exposed lysines by a SCF-like E3 ubiquitin-protein ligase complex containing ZSWIM8 during target-directed microRNA degradation (TDMD), a process that mediates degradation of microRNAs (miRNAs). Ubiquitination by the SCF-like E3 ubiquitin-protein ligase complex containing ZSWIM8 leads to its subsequent degradation, thereby exposing miRNAs for degradation. ZSWIM8 recognizes and binds AGO2 when it is engaged with a TDMD target. Phosphorylation at Ser-368 by AKT3; leads to up-regulate translational repression of microRNA target and down-regulate endonucleolytic cleavage. In terms of processing, a phosphorylation cycle of C-terminal serine cluster (Ser-805-Ser-815) regulates the release of target mRNAs. Target-binding leads to phosphorylation of these residues by CSNK1A1, which reduces the affinity of AGO2 for mRNA and enables target release. The ANKRD52-PPP6C phosphatase complex dephosphorylates the residues, which primes AGO2 for binding a new target.

It localises to the cytoplasm. The protein resides in the P-body. Its subcellular location is the nucleus. The catalysed reaction is Endonucleolytic cleavage to 5'-phosphomonoester.. Required for RNA-mediated gene silencing (RNAi) by the RNA-induced silencing complex (RISC). The 'minimal RISC' appears to include AGO2 bound to a short guide RNA such as a microRNA (miRNA) or short interfering RNA (siRNA). These guide RNAs direct RISC to complementary mRNAs that are targets for RISC-mediated gene silencing. The precise mechanism of gene silencing depends on the degree of complementarity between the miRNA or siRNA and its target. Binding of RISC to a perfectly complementary mRNA generally results in silencing due to endonucleolytic cleavage of the mRNA specifically by AGO2. Binding of RISC to a partially complementary mRNA results in silencing through inhibition of translation, and this is independent of endonuclease activity. May inhibit translation initiation by binding to the 7-methylguanosine cap, thereby preventing the recruitment of the translation initiation factor eIF4-E. May also inhibit translation initiation via interaction with EIF6, which itself binds to the 60S ribosomal subunit and prevents its association with the 40S ribosomal subunit. The inhibition of translational initiation leads to the accumulation of the affected mRNA in cytoplasmic processing bodies (P-bodies), where mRNA degradation may subsequently occur. In some cases RISC-mediated translational repression is also observed for miRNAs that perfectly match the 3' untranslated region (3'-UTR). Can also up-regulate the translation of specific mRNAs under certain growth conditions. Binds to the AU element of the 3'-UTR of the TNF (TNF-alpha) mRNA and up-regulates translation under conditions of serum starvation. Also required for transcriptional gene silencing (TGS), in which short RNAs known as antigene RNAs or agRNAs direct the transcriptional repression of complementary promoter regions. The sequence is that of Protein argonaute-2 (AGO2) from Oryctolagus cuniculus (Rabbit).